The sequence spans 86 residues: Serine protease inhibitor Kazal-type 2 (86 aa).

An N-terminal signal peptide occupies residues 1 to 16 (MLRLVLLLLVTDFAAS). The region spanning 32 to 86 (QFRTPDCGHFDFPACPRNLNPVCGTDMNTYSNECTLCMKIREDGSHINIIKDEPC) is the Kazal-like domain. Cystine bridges form between Cys-38/Cys-68, Cys-46/Cys-65, and Cys-54/Cys-86.

In terms of tissue distribution, expressed in sperm (at protein level). Expressed in testis but not in ovary, brain, heart, kidney or lung. Within testis, expressed in epididymis and germ cells.

It localises to the secreted. Its subcellular location is the cytoplasmic vesicle. It is found in the secretory vesicle. The protein resides in the acrosome. In terms of biological role, as a strong inhibitor of acrosin, it is required for normal spermiogenesis. It probably hinders premature activation of proacrosin and other proteases, thus preventing the cascade of events leading to spermiogenesis defects. May be involved in the regulation of serine protease-dependent germ cell apoptosis. It also inhibits trypsin. The sequence is that of Serine protease inhibitor Kazal-type 2 (Spink2) from Mus musculus (Mouse).